The chain runs to 173 residues: Disulfide bond formation protein B (173 aa).

Topologically, residues Met-1–Ser-16 are cytoplasmic. Residues Trp-17 to Tyr-33 form a helical membrane-spanning segment. Over Phe-34–Ile-51 the chain is Periplasmic. Cys-43 and Cys-46 are oxidised to a cystine. The helical transmembrane segment at Ala-52–Pro-67 threads the bilayer. The Cytoplasmic segment spans residues Gln-68–Trp-74. Residues Leu-75–Ile-92 traverse the membrane as a helical segment. At Glu-93–Gln-147 the chain is on the periplasmic side. The cysteines at positions 107 and 133 are disulfide-linked. The chain crosses the membrane as a helical span at residues Trp-148 to Ala-166. The Cytoplasmic portion of the chain corresponds to Gln-167–Arg-173.

This sequence belongs to the DsbB family.

The protein resides in the cell inner membrane. Required for disulfide bond formation in some periplasmic proteins. Acts by oxidizing the DsbA protein. This chain is Disulfide bond formation protein B, found in Vibrio cholerae serotype O1 (strain ATCC 39315 / El Tor Inaba N16961).